A 359-amino-acid polypeptide reads, in one-letter code: GDSL esterase/lipase At5g03610 (359 aa).

The first 22 residues, 1 to 22 (MDSLIKLFFCLFIFLCTSLLFG), serve as a signal peptide directing secretion. S50 functions as the Nucleophile in the catalytic mechanism. 3 N-linked (GlcNAc...) asparagine glycosylation sites follow: N136, N236, and N259. Active-site residues include D332 and H335.

It belongs to the 'GDSL' lipolytic enzyme family.

The protein resides in the secreted. This is GDSL esterase/lipase At5g03610 from Arabidopsis thaliana (Mouse-ear cress).